We begin with the raw amino-acid sequence, 463 residues long: MGLSLVLSCGVIAGISGFLFGYDSGIMTTTIAQEQFLQQFKPKESMVGTIVAIMQAGGFFGCLTAGKLSDLWGRRKAIMFGCVFVVVGGALQAAAYHTAMLLIGRLVTGFGVGSLTMTVPVYQAEISPPRWRGTIVGCQQLMLAIGSAIANWTGYGCSFVNSSFQWRMPLALQAVPGIVLFFGSYFLPESPRWLVEHDALDAALHVVQRLYPDKQNLDSAYAEFQEIVEQIKQEKAQASERSYLQIFRRKAWRKRLFLGAGIWLMLNLTGINVINYYLTQFFTSLGYKGRRAIFLSGVYGSVGAATTFLALFFVHRLSRKTPLMMANISQTATLIVMAGLTAASELGKSGQMGGVAMIFLFFVIYCSTWGPLSWVYASEIFPTQIRSKGYSMASAVNCEWRFYFLFVATNFISALVLLFLYPETSGKSLEAIDLLFDDHQTIHRSTLEENEVRRTSESVNAKH.

The next 11 membrane-spanning stretches (helical) occupy residues 5 to 27, 46 to 66, 83 to 103, 106 to 126, 141 to 161, 168 to 188, 256 to 276, 293 to 313, 323 to 343, 355 to 375, and 402 to 422; these read LVLSCGVIAGISGFLFGYDSGIM, MVGTIVAIMQAGGFFGCLTAG, VFVVVGGALQAAAYHTAMLLI, LVTGFGVGSLTMTVPVYQAEI, LMLAIGSAIANWTGYGCSFVN, MPLALQAVPGIVLFFGSYFLP, LFLGAGIWLMLNLTGINVINY, IFLSGVYGSVGAATTFLALFF, LMMANISQTATLIVMAGLTAA, VAMIFLFFVIYCSTWGPLSWV, and FYFLFVATNFISALVLLFLYP.

It belongs to the major facilitator superfamily. Sugar transporter (TC 2.A.1.1) family.

The protein resides in the membrane. Functionally, MFS-type transporter; part of the gene cluster that mediates the biosynthesis of echinulin family alkaloid. In Aspergillus cristatus (Chinese Fuzhuan brick tea-fermentation fungus), this protein is MFS-type transporter criB.